A 168-amino-acid polypeptide reads, in one-letter code: G/U mismatch-specific DNA glycosylase (168 aa).

Belongs to the uracil-DNA glycosylase (UDG) superfamily. TDG/mug family. Binds DNA as a monomer.

The protein localises to the cytoplasm. The catalysed reaction is Specifically hydrolyzes mismatched double-stranded DNA and polynucleotides, releasing free uracil.. Excises ethenocytosine and uracil, which can arise by alkylation or deamination of cytosine, respectively, from the corresponding mispairs with guanine in ds-DNA. It is capable of hydrolyzing the carbon-nitrogen bond between the sugar-phosphate backbone of the DNA and the mispaired base. The complementary strand guanine functions in substrate recognition. Required for DNA damage lesion repair in stationary-phase cells. The sequence is that of G/U mismatch-specific DNA glycosylase from Klebsiella pneumoniae subsp. pneumoniae (strain ATCC 700721 / MGH 78578).